The primary structure comprises 436 residues: Putative actin-fragmin kinase DDB_G0268748 (436 aa).

The disordered stretch occupies residues 14 to 58 (DKNIDSGSSSSNIGGSSSNSSGTTNKRSSGNFNGSSASSSPSSST). A compositionally biased stretch (low complexity) spans 18–57 (DSGSSSSNIGGSSSNSSGTTNKRSSGNFNGSSASSSPSSS).

It belongs to the protein kinase superfamily. AFK Ser/Thr protein kinase family.

This chain is Putative actin-fragmin kinase DDB_G0268748, found in Dictyostelium discoideum (Social amoeba).